The following is a 354-amino-acid chain: S-adenosylmethionine:tRNA ribosyltransferase-isomerase (354 aa).

The protein belongs to the QueA family. Monomer.

The protein resides in the cytoplasm. It carries out the reaction 7-aminomethyl-7-carbaguanosine(34) in tRNA + S-adenosyl-L-methionine = epoxyqueuosine(34) in tRNA + adenine + L-methionine + 2 H(+). Its pathway is tRNA modification; tRNA-queuosine biosynthesis. Functionally, transfers and isomerizes the ribose moiety from AdoMet to the 7-aminomethyl group of 7-deazaguanine (preQ1-tRNA) to give epoxyqueuosine (oQ-tRNA). The sequence is that of S-adenosylmethionine:tRNA ribosyltransferase-isomerase from Salmonella heidelberg (strain SL476).